The primary structure comprises 452 residues: Probable mannose-6-phosphate isomerase (452 aa).

Zn(2+) is bound by residues glutamine 141, histidine 143, glutamate 168, and histidine 295. Residue arginine 314 is part of the active site.

The protein belongs to the mannose-6-phosphate isomerase type 1 family. Requires Zn(2+) as cofactor.

The protein localises to the cytoplasm. It catalyses the reaction D-mannose 6-phosphate = D-fructose 6-phosphate. Its pathway is nucleotide-sugar biosynthesis; GDP-alpha-D-mannose biosynthesis; alpha-D-mannose 1-phosphate from D-fructose 6-phosphate: step 1/2. Functionally, involved in the synthesis of the GDP-mannose and dolichol-phosphate-mannose required for a number of critical mannosyl transfer reactions. In Dictyostelium discoideum (Social amoeba), this protein is Probable mannose-6-phosphate isomerase (mpi).